The sequence spans 469 residues: Sulfate adenylyltransferase subunit 1 (469 aa).

The tr-type G domain maps to K22–E237. A G1 region spans residues G31 to S38. G31 to S38 contributes to the GTP binding site. Positions G89–D93 are G2. Positions D110 to G113 are G3. GTP-binding positions include D110 to H114 and N165 to D168. Positions N165–D168 are G4. The interval S202 to K204 is G5.

This sequence belongs to the TRAFAC class translation factor GTPase superfamily. Classic translation factor GTPase family. CysN/NodQ subfamily. As to quaternary structure, heterodimer composed of CysD, the smaller subunit, and CysN.

It catalyses the reaction sulfate + ATP + H(+) = adenosine 5'-phosphosulfate + diphosphate. Its pathway is sulfur metabolism; hydrogen sulfide biosynthesis; sulfite from sulfate: step 1/3. Its function is as follows. With CysD forms the ATP sulfurylase (ATPS) that catalyzes the adenylation of sulfate producing adenosine 5'-phosphosulfate (APS) and diphosphate, the first enzymatic step in sulfur assimilation pathway. APS synthesis involves the formation of a high-energy phosphoric-sulfuric acid anhydride bond driven by GTP hydrolysis by CysN coupled to ATP hydrolysis by CysD. This chain is Sulfate adenylyltransferase subunit 1, found in Methylorubrum extorquens (strain CM4 / NCIMB 13688) (Methylobacterium extorquens).